The chain runs to 180 residues: Large ribosomal subunit protein uL5 (180 aa).

This sequence belongs to the universal ribosomal protein uL5 family. Part of the 50S ribosomal subunit; part of the 5S rRNA/L5/L18/L25 subcomplex. Contacts the 5S rRNA and the P site tRNA. Forms a bridge to the 30S subunit in the 70S ribosome.

Its function is as follows. This is one of the proteins that bind and probably mediate the attachment of the 5S RNA into the large ribosomal subunit, where it forms part of the central protuberance. In the 70S ribosome it contacts protein S13 of the 30S subunit (bridge B1b), connecting the 2 subunits; this bridge is implicated in subunit movement. Contacts the P site tRNA; the 5S rRNA and some of its associated proteins might help stabilize positioning of ribosome-bound tRNAs. This is Large ribosomal subunit protein uL5 from Ralstonia pickettii (strain 12J).